The following is a 236-amino-acid chain: Transcriptional regulatory protein RprY (236 aa).

Residues 9–123 (RILLCEDDEN…ELTFRIEAIL (115 aa)) form the Response regulatory domain. Position 58 is a 4-aspartylphosphate (Asp58). The ompR/PhoB-type DNA-binding region spans 134 to 231 (SNVYKIGKFT…IHGKGYKLIT (98 aa)).

Phosphorylated by RprX.

Its subcellular location is the cytoplasm. Member of the two-component regulatory system RprX/RprY. This Bacteroides fragilis (strain YCH46) protein is Transcriptional regulatory protein RprY (rprY).